A 171-amino-acid polypeptide reads, in one-letter code: ATP synthase subunit b (171 aa).

A helical membrane pass occupies residues 14–34 (LGDMLFIGISFIVLMALISVV). Positions 56-97 (SAQKSRQEASDLADQRRDALSHSRAEASEIVADAKKSGEKQR) are enriched in basic and acidic residues. A disordered region spans residues 56–104 (SAQKSRQEASDLADQRRDALSHSRAEASEIVADAKKSGEKQRSSIVADA).

This sequence belongs to the ATPase B chain family. F-type ATPases have 2 components, F(1) - the catalytic core - and F(0) - the membrane proton channel. F(1) has five subunits: alpha(3), beta(3), gamma(1), delta(1), epsilon(1). F(0) has three main subunits: a(1), b(2) and c(10-14). The alpha and beta chains form an alternating ring which encloses part of the gamma chain. F(1) is attached to F(0) by a central stalk formed by the gamma and epsilon chains, while a peripheral stalk is formed by the delta and b chains.

It is found in the cell membrane. Functionally, f(1)F(0) ATP synthase produces ATP from ADP in the presence of a proton or sodium gradient. F-type ATPases consist of two structural domains, F(1) containing the extramembraneous catalytic core and F(0) containing the membrane proton channel, linked together by a central stalk and a peripheral stalk. During catalysis, ATP synthesis in the catalytic domain of F(1) is coupled via a rotary mechanism of the central stalk subunits to proton translocation. Component of the F(0) channel, it forms part of the peripheral stalk, linking F(1) to F(0). This chain is ATP synthase subunit b, found in Lactiplantibacillus plantarum (strain ATCC BAA-793 / NCIMB 8826 / WCFS1) (Lactobacillus plantarum).